Here is a 265-residue protein sequence, read N- to C-terminus: Phosphonates import ATP-binding protein PhnC 1 (265 aa).

The region spanning 3 to 247 is the ABC transporter domain; it reads LRLSGIELRH…HLDTLYANEQ (245 aa). 36–43 serves as a coordination point for ATP; that stretch reads GPSGAGKT. The interval 245 to 265 is disordered; that stretch reads NEQLSPQPAPDVSETPWTPRC.

The protein belongs to the ABC transporter superfamily. Phosphonates importer (TC 3.A.1.9.1) family. The complex is composed of two ATP-binding proteins (PhnC), two transmembrane proteins (PhnE) and a solute-binding protein (PhnD).

The protein resides in the cell inner membrane. It carries out the reaction phosphonate(out) + ATP + H2O = phosphonate(in) + ADP + phosphate + H(+). Functionally, part of the ABC transporter complex PhnCDE involved in phosphonates import. Responsible for energy coupling to the transport system. The chain is Phosphonates import ATP-binding protein PhnC 1 from Pseudomonas savastanoi pv. phaseolicola (strain 1448A / Race 6) (Pseudomonas syringae pv. phaseolicola (strain 1448A / Race 6)).